Reading from the N-terminus, the 1596-residue chain is SET-binding protein (1596 aa).

Residues 1–12 (MESRETLSSSRQ) show a composition bias toward polar residues. Disordered stretches follow at residues 1-83 (MESR…WVAG), 134-426 (KQSG…SIKA), and 475-518 (SPSV…SRKL). The segment covering 64-81 (GSGRDVDSNSNADSEKWV) has biased composition (basic and acidic residues). Residues 164 to 175 (LTASDLAASDLK) are compositionally biased toward low complexity. 2 stretches are compositionally biased toward polar residues: residues 213 to 236 (KSSSQNHMDWSTNSDSGPVTQNCF) and 270 to 282 (AGNTWSQLSNNNK). Residues 290 to 306 (APSPSSHSSPAPPSSSA) are compositionally biased toward low complexity. Basic and acidic residues predominate over residues 363–372 (DNTEGKREGY). Over residues 375–395 (DSAQEASPARQNVSSASNPEN) the composition is skewed to polar residues. A DNA-binding region (a.T hook 1) is located at residues 584-596 (KKKRGRPKKQPLL). Disordered stretches follow at residues 604-624 (GTSTSPVSPISREFPGTKKRK), 722-763 (YIGK…AVPS), and 777-796 (HPLSTQLGGSNGNLSPASTE). The segment covering 779–796 (LSTQLGGSNGNLSPASTE) has biased composition (polar residues). An N6-acetyllysine modification is found at Lys817. Polar residues predominate over residues 854–880 (SPVSESHSEETIPSDSGIGTDNNSTSD). Positions 854-889 (SPVSESHSEETIPSDSGIGTDNNSTSDQAEKSSESR) are disordered. The a.T hook 2 DNA-binding region spans 1016-1028 (KKKRGRPAKTNDT). 6 disordered regions span residues 1134–1164 (PPKVGSASLSSGRLHKRKHKHKHKHKEDRIL), 1202–1225 (EKNKHKEKQKHQHSEAGHKASKNN), 1245–1300 (AKEK…GSKR), 1325–1344 (SSYDSSMSPGMPSPHLKVDQ), 1440–1473 (QRQSKTGNNFVKKRRGRPRKQPTQFDEDSRDQMP), and 1518–1596 (EAPP…EVLP). Residues 1146 to 1159 (RLHKRKHKHKHKHK) are compositionally biased toward basic residues. Over residues 1450-1459 (VKKRRGRPRK) the composition is skewed to basic residues. Positions 1451-1463 (KKRRGRPRKQPTQ) form a DNA-binding region, a.T hook 3. A run of 3 repeats spans residues 1520-1527 (PPLPPPPP), 1528-1535 (PPLPPPPP), and 1536-1543 (PPLPPPPP). The interval 1520 to 1543 (PPLPPPPPPPLPPPPPPPLPPPPP) is 3 X 8 AA tandem repeats of P-P-L-P-P-P-P-P. 2 stretches are compositionally biased toward pro residues: residues 1520 to 1546 (PPLPPPPPPPLPPPPPPPLPPPPPLPK) and 1560 to 1572 (PAQPPQQSPPQQP).

In terms of assembly, interacts with SET. As to expression, expressed in numerous tissues. Expressed at low levels in myeloid and monocytic cells as well as in CD34+ cells; expression levels are higher in myeloid malignancies.

Its subcellular location is the nucleus. This Homo sapiens (Human) protein is SET-binding protein (SETBP1).